The chain runs to 156 residues: SsrA-binding protein (156 aa).

The interval 135–156 is disordered; that stretch reads HALRERQDRREADRAMSERKDR.

Belongs to the SmpB family.

It localises to the cytoplasm. Functionally, required for rescue of stalled ribosomes mediated by trans-translation. Binds to transfer-messenger RNA (tmRNA), required for stable association of tmRNA with ribosomes. tmRNA and SmpB together mimic tRNA shape, replacing the anticodon stem-loop with SmpB. tmRNA is encoded by the ssrA gene; the 2 termini fold to resemble tRNA(Ala) and it encodes a 'tag peptide', a short internal open reading frame. During trans-translation Ala-aminoacylated tmRNA acts like a tRNA, entering the A-site of stalled ribosomes, displacing the stalled mRNA. The ribosome then switches to translate the ORF on the tmRNA; the nascent peptide is terminated with the 'tag peptide' encoded by the tmRNA and targeted for degradation. The ribosome is freed to recommence translation, which seems to be the essential function of trans-translation. The protein is SsrA-binding protein of Kineococcus radiotolerans (strain ATCC BAA-149 / DSM 14245 / SRS30216).